Reading from the N-terminus, the 517-residue chain is MPPPGKVPRKENLWLQCEWGSCSFVCSTMEKFFEHVTQHLQQHLHGSGEEEEEEEEDDPLEEEFSCLWQECGFCSLDSSADLIRHVYFHCYHTKLKQWGLQALQSQADLGPCILDFQSRNVIPDIPDHFLCLWEHCENSFDNPEWFYRHVEAHSLCCEYEAVGKDNPVVLCGWKGCTCTFKDRSKLREHLRSHTQEKVVACPTCGGMFANNTKFLDHIRRQTSLDQQHFQCSHCSKRFATERLLRDHMRNHVNHYKCPLCDMTCPLPSSLRNHMRFRHSEDRPFKCDCCDYSCKNLIDLQKHLDTHSEEPAYRCDFENCTFSARSLCSIKSHYRKVHEGDSEPRYKCHVCDKCFTRGNNLTVHLRKKHQFKWPSGHPRFRYKEHEDGYMRLQLVRYESVELTQQLLRQPQEGSGLGTSLNESSLQGIILETVPGEPGRKEEEEEGKGSEGTALSASQDNPSSVIHVVNQTNAQGQQEIVYYVLSEAPGEPPPAPEPPSGGIMEKLQGIAEEPEIQMV.

C2H2-type zinc fingers lie at residues 15–39, 129–153, and 169–193; these read LQCE…VTQH, FLCL…VEAH, and VLCG…LRSH. The C2H2-type 4; degenerate zinc finger occupies 199–221; sequence VACPTCGGMFANNTKFLDHIRRQ. 5 consecutive C2H2-type zinc fingers follow at residues 229–251, 255–278, 284–306, 312–337, and 345–368; these read FQCS…MRNH, YKCP…RFRH, FKCD…LDTH, YRCD…RKVH, and YKCH…RKKH. The interval 373 to 517 is interaction with NPAT; the sequence is PSGHPRFRYK…IAEEPEIQMV (145 aa). The interval 374-407 is required for activation of histone H4 transcription and contributes to DNA-binding; sequence SGHPRFRYKEHEDGYMRLQLVRYESVELTQQLLR. The tract at residues 431–460 is disordered; that stretch reads TVPGEPGRKEEEEEGKGSEGTALSASQDNP. Positions 451–460 are enriched in polar residues; it reads TALSASQDNP.

As to quaternary structure, binds MBD2 and a histone deacetylase complex. Interacts with NPAT. Post-translationally, ubiquitinated. Ubiquitination may lead to proteasome-mediated degradation. Ubiquitous. Highly expressed in brain, heart, skeletal muscle, spleen, kidney, small intestine, placenta and liver.

It localises to the nucleus. In terms of biological role, transcriptional repressor that binds to the consensus sequence 5'-CGGACGTT-3' and to the RB1 promoter. Transcriptional activator that promotes histone H4 gene transcription at the G1/S phase transition in conjunction with NPAT. Also activates transcription of the ATM and PRKDC genes. Autoregulates its expression by associating with its own promoter. The sequence is that of Histone H4 transcription factor (HINFP) from Homo sapiens (Human).